Reading from the N-terminus, the 372-residue chain is Ligninase LG3 (372 aa).

Residues 1 to 21 (MAFKQLFAAISLALSLSAANA) form the signal peptide. Positions 22-28 (AAVIEKR) are excised as a propeptide. Intrachain disulfides connect Cys-31–Cys-43 and Cys-62–Cys-148. His-75 functions as the Proton acceptor in the catalytic mechanism. Residues Asp-76, Gly-94, Asp-96, and Ser-98 each coordinate Ca(2+). Residue His-204 participates in heme b binding. Residues Ser-205, Asp-222, Thr-224, Ile-227, and Asp-229 each contribute to the Ca(2+) site. The cysteines at positions 277 and 345 are disulfide-linked. N-linked (GlcNAc...) asparagine glycosylation occurs at Asn-285. Over residues 350–361 (FPTLTTLPGPET) the composition is skewed to low complexity. Positions 350-372 (FPTLTTLPGPETSVQRIPPPPGA) are disordered.

Belongs to the peroxidase family. Ligninase subfamily. Requires heme b as cofactor. The cofactor is Ca(2+).

The enzyme catalyses 1-(3,4-dimethoxyphenyl)-2-(2-methoxyphenoxy)propane-1,3-diol + H2O2 = 3,4-dimethoxybenzaldehyde + guaiacol + glycolaldehyde + H2O. It catalyses the reaction 2 (3,4-dimethoxyphenyl)methanol + H2O2 = 2 (3,4-dimethoxyphenyl)methanol radical + 2 H2O. Its pathway is secondary metabolite metabolism; lignin degradation. Functionally, depolymerization of lignin. Catalyzes the C(alpha)-C(beta) cleavage of the propyl side chains of lignin. The protein is Ligninase LG3 (GLG3) of Phanerodontia chrysosporium (White-rot fungus).